Consider the following 284-residue polypeptide: Mevalonate kinase (284 aa).

86-96 lines the ATP pocket; the sequence is PIGSGLGSSAA. Residue D137 is the Proton acceptor of the active site.

This sequence belongs to the GHMP kinase family. Mevalonate kinase subfamily. In terms of assembly, homodimer. Mg(2+) serves as cofactor.

The protein localises to the cytoplasm. It catalyses the reaction (R)-mevalonate + ATP = (R)-5-phosphomevalonate + ADP + H(+). Its pathway is isoprenoid biosynthesis; isopentenyl diphosphate biosynthesis via mevalonate pathway; isopentenyl diphosphate from (R)-mevalonate: step 1/3. Functionally, catalyzes the phosphorylation of (R)-mevalonate (MVA) to (R)-mevalonate 5-phosphate (MVAP). Functions in the mevalonate (MVA) pathway leading to isopentenyl diphosphate (IPP), a key precursor for the biosynthesis of isoprenoid compounds such as archaeal membrane lipids. The protein is Mevalonate kinase of Archaeoglobus fulgidus (strain ATCC 49558 / DSM 4304 / JCM 9628 / NBRC 100126 / VC-16).